The primary structure comprises 588 residues: Aspartate--tRNA ligase (588 aa).

Glu171 is a binding site for L-aspartate. Residues 195–198 form an aspartate region; the sequence is QLFK. Arg217 is a binding site for L-aspartate. Residues 217–219 and Gln226 contribute to the ATP site; that span reads RDE. L-aspartate is bound at residue His447. Residue Glu481 coordinates ATP. Position 488 (Arg488) interacts with L-aspartate. 533-536 is a binding site for ATP; that stretch reads GLDR.

This sequence belongs to the class-II aminoacyl-tRNA synthetase family. Type 1 subfamily. In terms of assembly, homodimer.

It is found in the cytoplasm. It catalyses the reaction tRNA(Asp) + L-aspartate + ATP = L-aspartyl-tRNA(Asp) + AMP + diphosphate. In terms of biological role, catalyzes the attachment of L-aspartate to tRNA(Asp) in a two-step reaction: L-aspartate is first activated by ATP to form Asp-AMP and then transferred to the acceptor end of tRNA(Asp). This chain is Aspartate--tRNA ligase, found in Aeromonas salmonicida (strain A449).